A 410-amino-acid polypeptide reads, in one-letter code: UDP-N-acetylglucosamine--dolichyl-phosphate N-acetylglucosaminephosphotransferase (410 aa).

Residues 1-10 (MWAFPELPLP) lie on the Lumenal side of the membrane. A helical membrane pass occupies residues 11–40 (LPLLVNLIGSLLGFVATVTLIPAFRSHFIA). Residues 41-60 (ARLCGQDLNKLSQQQIPESQ) are Cytoplasmic-facing. UDP-N-acetyl-alpha-D-glucosamine contacts are provided by residues 46-48 (QDL) and Glu58. Residues 61 to 80 (GVISGAVFLIILFCFIPFPF) form a helical membrane-spanning segment. The Lumenal segment spans residues 81-93 (LNCFVEEQCKAFP). Residues 94–120 (HHEFVALIGALLAICCMIFLGFADDVL) form a helical membrane-spanning segment. Residues 121-123 (NLR) are Cytoplasmic-facing. The helical transmembrane segment at 124–145 (WRHKLLLPTAASLPLLMVYFTN) threads the bilayer. Residue Lys127 coordinates dolichyl phosphate. The Lumenal portion of the chain corresponds to 146 to 168 (FGNTTIVVPKPFRWILGLHLDLG). Residue Asn148 is glycosylated (N-linked (GlcNAc...) asparagine). A helical transmembrane segment spans residues 169 to 188 (ILYYVYMGLLAVFCTNAINI). A dolichyl phosphate-binding site is contributed by 180–188 (VFCTNAINI). Position 187 (Asn187) interacts with Mg(2+). Over 189 to 194 (LAGING) the chain is Cytoplasmic. Residue Asn193 coordinates UDP-N-acetyl-alpha-D-glucosamine. The helical transmembrane segment at 195–215 (LEAGQSLVISASIIVFNLVEL) threads the bilayer. The Lumenal portion of the chain corresponds to 216 to 220 (EGDYR). Residues 221–244 (DDHIFSLYFMIPFFFTTLGLLYHN) traverse the membrane as a helical segment. Topologically, residues 245–252 (WYPSRVFV) are cytoplasmic. A helical transmembrane segment spans residues 253–271 (GDTFCYFAGMTFAVVGILG). A Mg(2+)-binding site is contributed by Asp254. The Lumenal portion of the chain corresponds to 272 to 273 (HF). A helical transmembrane segment spans residues 274–295 (SKTMLLFFMPQVFNFLYSLPQL). Topologically, residues 296 to 377 (FHIIPCPRHR…LLLKVFGPIH (82 aa)) are cytoplasmic. Residue 303-305 (RHR) participates in UDP-N-acetyl-alpha-D-glucosamine binding. The chain crosses the membrane as a helical span at residues 378–402 (ERNLTLLLLLLQVLSSAATFSIRYQ). The Lumenal segment spans residues 403-410 (LVRLFYDV).

It belongs to the glycosyltransferase 4 family. Homodimer. Mg(2+) is required as a cofactor.

It is found in the endoplasmic reticulum membrane. It catalyses the reaction a di-trans,poly-cis-dolichyl phosphate + UDP-N-acetyl-alpha-D-glucosamine = an N-acetyl-alpha-D-glucosaminyl-diphospho-di-trans,poly-cis-dolichol + UMP. Its pathway is protein modification; protein glycosylation. Its activity is regulated as follows. Inhibited by natural nucleoside antibiotic tunicamycin, which acts as a structural analog and competitor of UDP-GlcNAc. Functionally, UDP-N-acetylglucosamine--dolichyl-phosphate N-acetylglucosaminephosphotransferase that operates in the biosynthetic pathway of dolichol-linked oligosaccharides, the glycan precursors employed in protein asparagine (N)-glycosylation. The assembly of dolichol-linked oligosaccharides begins on the cytosolic side of the endoplasmic reticulum membrane and finishes in its lumen. The sequential addition of sugars to dolichol pyrophosphate produces dolichol-linked oligosaccharides containing fourteen sugars, including two GlcNAcs, nine mannoses and three glucoses. Once assembled, the oligosaccharide is transferred from the lipid to nascent proteins by oligosaccharyltransferases. Catalyzes the initial step of dolichol-linked oligosaccharide biosynthesis, transfering GlcNAc-1-P from cytosolic UDP-GlcNAc onto the carrier lipid dolichyl phosphate (P-dolichol), yielding GlcNAc-P-P-dolichol embedded in the cytoplasmic leaflet of the endoplasmic reticulum membrane. The chain is UDP-N-acetylglucosamine--dolichyl-phosphate N-acetylglucosaminephosphotransferase from Mus musculus (Mouse).